Here is a 146-residue protein sequence, read N- to C-terminus: SMR1 protein (146 aa).

The N-terminal stretch at 1–22 (MKSLYLIFGLWILLACFQSGEG) is a signal peptide. Disordered regions lie at residues 23 to 43 (VRGP…TLPH) and 99 to 146 (TAPD…GGGK). The segment covering 109–139 (PPTQLHSTEQANTKTDAKISNTTATTQNSTD) has biased composition (polar residues). N-linked (GlcNAc...) asparagine glycans are attached at residues N129 and N136.

In terms of processing, several O-linked glycosylation sites might be present in the C-terminal part. As to expression, expressed predominantly in the acinar cells of the submandibular gland and to lesser extent in the prostate.

The protein localises to the secreted. Sialorphin may be involved in the modulation of mineral balance between at least four systems: kidney, bone, tooth and circulation. In terms of biological role, submandibular gland peptide T is able to directly or indirectly down-regulate cardiovascular depression induced by septic shock (endotoxin stimuli), or anaphylactic challenge (nematode antigen sensitization). Functionally, sialorphin is an endogenous inhibitor of neprilysin. Inhibits the breakdown of Met-enkephalin and substance P in isolated tissue from the dorsal zone of the rat spinal cord. Has an analgesic effect when administered to rats by intravenous injection. This is SMR1 protein (Vcsa1) from Rattus norvegicus (Rat).